We begin with the raw amino-acid sequence, 193 residues long: Putative kinase protein 029R (193 aa).

ATP is bound at residue 9–17; it reads GIIGSGKSS. 3 residues coordinate substrate: Glu-31, Tyr-43, and Gln-54. The active-site Proton acceptor is Glu-78. 2 residues coordinate substrate: Arg-79 and Glu-142.

The protein belongs to the DCK/DGK family.

The chain is Putative kinase protein 029R from Aedes vexans (Inland floodwater mosquito).